Reading from the N-terminus, the 946-residue chain is MKPLSSPLQQYRQTVVERLPEPLAEEPLSAQAKSVLTFSDFVQDSIIAHREWLTELESQPPQADEWQHYAAWLQEALSNVSDEAGLMRELRLFRRRIMVRIAWAQTLALVTEESILQQLSYLAETLIVAARDWLYDACCREWGTPCNAQGEAQPLLILGMGKLGGGELNFSSDIDLIFAWPEHGCTQGGRRELDNAQFFTRMGQRLIKVLDQPTQDGFVYRVDMRLRPFGESGPLVLSFAALEDYYQEQGRDWERYAMVKARIMGDSEGVYANELRAMLRPFVFRRYIDFSVIQSLRNMKGMIAREVRRRGLTDNIKLGAGGIREIEFIVQVFQLIRGGREPSLQSCSLLPTLSAIAALHLLSENDAEQLRVAYLFLRRLENLLQSINDEQTQTLPSDELNRARLAWAMDFADWPQLTGALTAHMNNVRRVFNELIGDDESETQEESLSEQWRELWQDALQEDDTTPVLAHLSEDDRKQVLTLISDFRKELDKRTIGPRGRQVLDHLMPHLLSDVCAREDAAVTLSRITALLVGIVTRTTYLELLSEFPAALNHLISLCAASPMIASQLARYPLLLDELLDPNTLYQPTATDAYRDELRQYLLRVPEDDEEQQLEALRQFKQAQLLRIAAADIAGTLPVMKVSDHLTWLAEAMIDAVVQQAWVQMVARYGKPNHLNDREGRGFAVVGYGKLGGWELGYSSDLDLIFLHDCPMDAMTDGEREIDGRQFYLRLAQRIMHLFSTRTSSGILYEVDARLRPSGAAGMLVTSTEAFADYQKNEAWTWEHQALVRARVVYGDPQLTAHFDAVRREIMTLPREGRTLQTEVREMREKMRAHLGNKHRDRFDIKADEGGITDIEFITQYLVLRYAHEKPKLTRWSDNVRILELLAQNDIMEEQEAMALTRAYTTLRDELHHLALQELPGHVSGDCFTAERDLVRASWQKWLVEE.

The segment at Met1–Glu440 is adenylyl removase. The adenylyl transferase stretch occupies residues Ser449–Glu946.

Belongs to the GlnE family. Requires Mg(2+) as cofactor.

The catalysed reaction is [glutamine synthetase]-O(4)-(5'-adenylyl)-L-tyrosine + phosphate = [glutamine synthetase]-L-tyrosine + ADP. It catalyses the reaction [glutamine synthetase]-L-tyrosine + ATP = [glutamine synthetase]-O(4)-(5'-adenylyl)-L-tyrosine + diphosphate. In terms of biological role, involved in the regulation of glutamine synthetase GlnA, a key enzyme in the process to assimilate ammonia. When cellular nitrogen levels are high, the C-terminal adenylyl transferase (AT) inactivates GlnA by covalent transfer of an adenylyl group from ATP to specific tyrosine residue of GlnA, thus reducing its activity. Conversely, when nitrogen levels are low, the N-terminal adenylyl removase (AR) activates GlnA by removing the adenylyl group by phosphorolysis, increasing its activity. The regulatory region of GlnE binds the signal transduction protein PII (GlnB) which indicates the nitrogen status of the cell. In Shigella sonnei (strain Ss046), this protein is Bifunctional glutamine synthetase adenylyltransferase/adenylyl-removing enzyme.